We begin with the raw amino-acid sequence, 130 residues long: Small ribosomal subunit protein uS9 (130 aa).

Belongs to the universal ribosomal protein uS9 family.

In Hahella chejuensis (strain KCTC 2396), this protein is Small ribosomal subunit protein uS9.